The chain runs to 792 residues: Xaa-Pro dipeptidyl-peptidase (792 aa).

Catalysis depends on charge relay system residues serine 363, aspartate 482, and histidine 513.

It belongs to the peptidase S15 family. In terms of assembly, homodimer.

It is found in the cytoplasm. It carries out the reaction Hydrolyzes Xaa-Pro-|- bonds to release unblocked, N-terminal dipeptides from substrates including Ala-Pro-|-p-nitroanilide and (sequentially) Tyr-Pro-|-Phe-Pro-|-Gly-Pro-|-Ile.. In terms of biological role, removes N-terminal dipeptides sequentially from polypeptides having unsubstituted N-termini provided that the penultimate residue is proline. In Lactobacillus delbrueckii subsp. bulgaricus (strain ATCC BAA-365 / Lb-18), this protein is Xaa-Pro dipeptidyl-peptidase.